We begin with the raw amino-acid sequence, 218 residues long: MSTLNYLLIFILAYLIGSFPTGVLVGKIFFHEDIRNFGSGNIGTTNSFRVMGPVAGSAVLVIDVLKGTLATDLPLIFHLKGPKYLLLIAGACAILGHTFSIFLKFKGGKAVATSAGVFLGYNLKFFGLCALVFLPMLFITSYVSLSSLVSIVIIFICSFWFHDIFLTIITGIMMILLFVRHRSNIKRLINHEENIVPFGLWYWYKKSHGLLKKNAKNK.

The next 5 helical transmembrane spans lie at 6–26 (YLLI…VLVG), 50–70 (VMGP…GTLA), 85–105 (LLLI…FLKF), 115–135 (AGVF…VFLP), and 159–179 (FWFH…LLFV).

It belongs to the PlsY family. As to quaternary structure, probably interacts with PlsX.

The protein localises to the cell membrane. The enzyme catalyses an acyl phosphate + sn-glycerol 3-phosphate = a 1-acyl-sn-glycero-3-phosphate + phosphate. It participates in lipid metabolism; phospholipid metabolism. Catalyzes the transfer of an acyl group from acyl-phosphate (acyl-PO(4)) to glycerol-3-phosphate (G3P) to form lysophosphatidic acid (LPA). This enzyme utilizes acyl-phosphate as fatty acyl donor, but not acyl-CoA or acyl-ACP. The sequence is that of Glycerol-3-phosphate acyltransferase 2 from Lactobacillus johnsonii (strain CNCM I-12250 / La1 / NCC 533).